The sequence spans 690 residues: Cyclic nucleotide-gated channel alpha-1 (690 aa).

At 1–163 the chain is on the cytoplasmic side; the sequence is MKKVIINTWH…VVIDPSGNTY (163 aa). Disordered regions lie at residues 33 to 76 and 88 to 151; these read GACS…PSQR and NVNN…EEKK. Residues 40–54 show a composition bias toward acidic residues; sequence GDDDDSASMFEESET. Residues 64–76 are compositionally biased toward polar residues; it reads RSNTHGSGQPSQR. Residues 111 to 151 show a composition bias toward basic and acidic residues; that stretch reads SKPDDKNENKKDPEKKKKKEKDKDKKKKEEKGKDKKEEEKK. Residues 164-185 traverse the membrane as a helical segment; it reads YNWLFCITLPVMYNWTMIIARA. Over 186–195 the chain is Extracellular; it reads CFDELQSDYL. The helical transmembrane segment at 196-215 threads the bilayer; the sequence is EYWLAFDYLSDVVYLLDMFV. The Cytoplasmic portion of the chain corresponds to 216 to 241; sequence RTRTGYLEQGLLVKEERKLIDKYKST. Residues 242–251 traverse the membrane as a helical segment; it reads FQFKLDVLSV. Over 252-264 the chain is Extracellular; the sequence is IPTDLLYIKFGWN. A helical membrane pass occupies residues 265–283; the sequence is YPEIRLNRLLRISRMFEFF. Residues 284–291 lie on the Cytoplasmic side of the membrane; it reads QRTETRTN. The chain crosses the membrane as a helical span at residues 292-315; that stretch reads YPNIFRISNLVMYIIIIIHWNACV. The tract at residues 293-402 is ion conduction pathway; that stretch reads PNIFRISNLV…NIGSMISNMN (110 aa). Residues 316–342 are Extracellular-facing; that stretch reads YFSISKAIGFGNDTWVYPDVNDPDFGR. N-linked (GlcNAc...) asparagine glycosylation is present at Asn327. A run of 2 helical transmembrane segments spans residues 343–373 and 374–399; these read LARKYVYSLYWSTLTLTTIGETPPPVRDSEY and FFVVADFLIGVLIFATIVGNIGSMIS. A selectivity filter region spans residues 360-363; that stretch reads TIGE. Over 400 to 690 the chain is Cytoplasmic; that stretch reads NMNAARAEFQ…ESGPTDSTQD (291 aa). Residues 403–479 form a C-linker region; it reads AARAEFQARI…DTLKKVRIFA (77 aa). Positions 482–603 are cyclic nucleotide-binding domain (CNBD); that stretch reads EAGLLVELVL…EEKGKQILMK (122 aa). Residues Gly543, Ser546, Arg559, and Thr560 each coordinate 3',5'-cyclic GMP. The 3',5'-cyclic AMP site is built by Arg559 and Thr560. Residues 621–664 adopt a coiled-coil conformation; the sequence is LEEKVTRMESSVDLLQTRFARILAEYESMQQKLKQRLTKVEKFL.

The protein belongs to the cyclic nucleotide-gated cation channel (TC 1.A.1.5) family. CNGA1 subfamily. In terms of assembly, forms a heterotetramer with CNGB1 in a 3:1 ratio. May also form cyclic nucleotide-activated homotetrameric channels, that are efficiently activated by saturating cGMP, but poorly activated by saturating cAMP compared to the heterotetramer with CNGB1. The channel binds Ca(2+)-bound CALM1 via CaM1 and CaM2 regions of the CNGB1 subunit; this interaction modulates the affinity of the channel for cNMPs in response to intracellular Ca(2+) levels. Expressed in the retina, in rod cells (at protein level).

It is found in the cell membrane. It catalyses the reaction Ca(2+)(in) = Ca(2+)(out). It carries out the reaction Na(+)(in) = Na(+)(out). The enzyme catalyses K(+)(in) = K(+)(out). The catalysed reaction is NH4(+)(in) = NH4(+)(out). It catalyses the reaction Rb(+)(in) = Rb(+)(out). It carries out the reaction Li(+)(in) = Li(+)(out). The enzyme catalyses Cs(+)(in) = Cs(+)(out). Pore-forming subunit of the rod cyclic nucleotide-gated channel. Mediates rod photoresponses at dim light converting transient changes in intracellular cGMP levels into electrical signals. In the dark, cGMP levels are high and keep the channel open enabling a steady inward current carried by Na(+) and Ca(2+) ions that leads to membrane depolarization and neurotransmitter release from synaptic terminals. Upon photon absorption cGMP levels decline leading to channel closure and membrane hyperpolarization that ultimately slows neurotransmitter release and signals the presence of light, the end point of the phototransduction cascade. Conducts cGMP- and cAMP-gated ion currents, with permeability for monovalent and divalent cations. The selectivity for Ca(2+) over Na(+) increases with cGMP concentrations, whereas the selectivity among monovalent ions is independent of the cGMP levels. The polypeptide is Cyclic nucleotide-gated channel alpha-1 (Bos taurus (Bovine)).